Reading from the N-terminus, the 194-residue chain is Ribonuclease HII (194 aa).

In terms of domain architecture, RNase H type-2 spans 1–194 (MTVGVDEVGR…RLFPRDDGLR (194 aa)). Residues Asp6, Glu7, and Asp102 each contribute to the a divalent metal cation site.

The protein belongs to the RNase HII family. Requires Mn(2+) as cofactor. It depends on Mg(2+) as a cofactor.

It is found in the cytoplasm. It carries out the reaction Endonucleolytic cleavage to 5'-phosphomonoester.. Its function is as follows. Endonuclease that specifically degrades the RNA of RNA-DNA hybrids. The sequence is that of Ribonuclease HII from Synechococcus sp. (strain WH7803).